The chain runs to 667 residues: Endogenous retrovirus group K member 5 Gag polyprotein (667 aa).

The N-myristoyl glycine moiety is linked to residue glycine 2. Residues 166 to 188 form a disordered region; the sequence is KGPELVGPSESKPRGPSPLPAGQ. 2 CCHC-type zinc fingers span residues 543-560 and 580-597; these read KKCY…SCPV and GLCP…QCHS. A disordered region spans residues 598–667; sequence KFDKDGQPLS…CPAPQQAAPQ (70 aa). Polar residues predominate over residues 648–667; that stretch reads GVSQLQQSNSCPAPQQAAPQ.

The protein belongs to the beta type-B retroviral Gag protein family. HERV class-II K(HML-2) gag subfamily. Post-translationally, myristoylation is essential for retroviral assembly. Alteration of the glycine residue leads to a block in the budding of particles and an accumulation of Gag inside the cell. In terms of processing, specific enzymatic cleavages may yield mature proteins.

Its subcellular location is the cell membrane. In terms of biological role, the products of the Gag polyproteins of infectious retroviruses perform highly complex orchestrated tasks during the assembly, budding, maturation, and infection stages of the viral replication cycle. During viral assembly, the proteins form membrane associations and self-associations that ultimately result in budding of an immature virion from the infected cell. Gag precursors also function during viral assembly to selectively bind and package two plus strands of genomic RNA. Endogenous Gag proteins may have kept, lost or modified their original function during evolution. In Homo sapiens (Human), this protein is Endogenous retrovirus group K member 5 Gag polyprotein (ERVK-5).